We begin with the raw amino-acid sequence, 82 residues long: Envelope small membrane protein (82 aa).

The Virion surface portion of the chain corresponds to 1–16 (MVDVFFTDTAWYVGQI). Residues 17–37 (FFLVLSCVIFLIFVVALLATI) traverse the membrane as a helical segment. Residues 38-78 (KLCIQICGFCNIFIISPSAYVYNRGRQLYKSYSEHVIPSTL) lie on the Intravirion side of the membrane.

This sequence belongs to the betacoronaviruses E protein family. Homopentamer. Interacts with membrane protein M in the budding compartment of the host cell, which is located between endoplasmic reticulum and the Golgi complex. Interacts with Nucleoprotein.

The protein resides in the host Golgi apparatus membrane. Its function is as follows. Plays a central role in virus morphogenesis and assembly. Acts as a viroporin and self-assembles in host membranes forming pentameric protein-lipid pores that allow ion transport. Also plays a role in the induction of apoptosis. The sequence is that of Envelope small membrane protein from Homo sapiens (Human).